The chain runs to 147 residues: 3-dehydroquinate dehydratase 1 (147 aa).

Tyrosine 23 (proton acceptor) is an active-site residue. The substrate site is built by asparagine 75, histidine 81, and aspartate 88. Histidine 101 (proton donor) is an active-site residue. Substrate-binding positions include 102 to 103 (LS) and arginine 112.

The protein belongs to the type-II 3-dehydroquinase family. As to quaternary structure, homododecamer.

It catalyses the reaction 3-dehydroquinate = 3-dehydroshikimate + H2O. It participates in metabolic intermediate biosynthesis; chorismate biosynthesis; chorismate from D-erythrose 4-phosphate and phosphoenolpyruvate: step 3/7. In terms of biological role, catalyzes a trans-dehydration via an enolate intermediate. The chain is 3-dehydroquinate dehydratase 1 (aroQ1) from Pseudomonas aeruginosa (strain ATCC 15692 / DSM 22644 / CIP 104116 / JCM 14847 / LMG 12228 / 1C / PRS 101 / PAO1).